Reading from the N-terminus, the 415-residue chain is Phakinin (415 aa).

The interval 1–26 is disordered; the sequence is MSTRRVVVDAPAGASSSMPLQRHKAS. Ser2 carries the N-acetylserine modification. Residues 2–114 form a head region; it reads STRRVVVDAP…LGAVEDLGGC (113 aa). A phosphoserine mark is found at Ser26, Ser32, and Ser35. Thr53 is modified (phosphothreonine). 2 positions are modified to phosphoserine: Ser90 and Ser100. The IF rod domain occupies 104–415; it reads DLGAVEDLGG…HALLDREESS (312 aa). Coiled coils occupy residues 115 to 144, 199 to 248, and 295 to 395; these read LVEY…ESKA, RKAA…VKML, and QAKQ…LSHK. Residues 396–415 are tail; the sequence is CQLQRDVASYHALLDREESS.

It belongs to the intermediate filament family. Part of a complex required for lens intermediate filament formation composed of BFSP1, BFSP2 and CRYAA. Found in a complex composed of PPL (via C-terminal linker domain), BFSP1 and BFSP2 in the retinal lens. Within the complex interacts with PPL (via C-terminal linker domain) and with BFSP1. Identified in a complex that contains VIM, EZR, AHNAK, BFSP1, BFSP2, ANK2, PLEC, PRX and spectrin. Interacts with LGSN. Interacts with VIM. As to expression, abundantly expressed in both the inner and outer cortex of the retina, expressed at a lower level in the nucleus of the retina (at protein level). Detected in eye lens fiber cells (at protein level).

Its subcellular location is the cell membrane. The protein localises to the cytoplasm. It is found in the cytoskeleton. It localises to the cell cortex. Required for the correct formation of lens intermediate filaments as part of a complex composed of BFSP1, BFSP2 and CRYAA. Plays a role in maintenance of retinal lens optical clarity. This is Phakinin (BFSP2) from Bos taurus (Bovine).